We begin with the raw amino-acid sequence, 79 residues long: Short neurotoxin 2 (79 aa).

The first 19 residues, 1–19 (PLLLTLVVVTIVCLDLGYT), serve as a signal peptide directing secretion. 4 disulfides stabilise this stretch: C22/C41, C36/C58, C60/C71, and C72/C77.

The protein belongs to the three-finger toxin family. Short-chain subfamily. Type I alpha-neurotoxin sub-subfamily. Expressed by the venom gland.

It localises to the secreted. Binds to muscle nicotinic acetylcholine receptor (nAChR) and inhibit acetylcholine from binding to the receptor, thereby impairing neuromuscular transmission. In Hydrophis cyanocinctus (Asian annulated sea snake), this protein is Short neurotoxin 2.